The following is a 345-amino-acid chain: Metal-dependent phosphohydrolase cns2 (345 aa).

Positions 70 to 171 (RLEHSVGAFI…QLCADRLDYA (102 aa)) constitute an HD domain.

Interacts with cns1.

Its subcellular location is the lipid droplet. The protein operates within secondary metabolite biosynthesis. In terms of biological role, metal-dependent phosphohydrolase; part of the gene cluster that mediates the biosynthesis of cordycepin (COR) and pentostatin (PTN), two adenosine analogs with related bioactivity profiles as both mimic adenosine and can inhibit some of the processes that are adenosine dependent. Within the pathway, cns2 catalyzes dephosphorylation of 3'-AMP to produce 2'-carbonyl-3'-deoxyadenosine (2'-C-3'-dA). The first step of cordycepin biosynthesis involves hydroxyl phosphorylation of the 3'-OH position on adenosine to produce adenosine-3'-monophosphate (3'-AMP), catalyzed by kinase activity of cns3. Next, 3'-AMP is dephosphorylated to 2'-carbonyl-3'-deoxyadenosine by cns2, which is finally converted to cordycepin (3'-deoxyadenosine) by the oxidoreductase cns1. The sequence is that of Metal-dependent phosphohydrolase cns2 from Cordyceps militaris (strain CM01) (Caterpillar fungus).